The following is a 224-amino-acid chain: MSTLHKVKAYFGMAPMDEYEDDYYEDDDRGPAPRGYRRPREDRFEDEGYAPRGYDGHPEDRRRDYDEPPAYRAGLAGGMPGGFDDARFEARMRAPREFDRTPPRFGAMRGSTRGALAMDPRGMAELFEAGSPLAKITTLRPKDYSEARTIGERFRDGTPVIMDLVSMDNADAKRLVDFAAGLAFALRGSFDKVATKVFLLSPADVDVTAEQRRRIAEAGFYSYQ.

The tract at residues 21-78 is disordered; the sequence is DDYYEDDDRGPAPRGYRRPREDRFEDEGYAPRGYDGHPEDRRRDYDEPPAYRAGLAGG. Positions 54–66 are enriched in basic and acidic residues; sequence YDGHPEDRRRDYD.

The protein belongs to the SepF family. Homodimer. Interacts with FtsZ.

The protein localises to the cytoplasm. Its function is as follows. Cell division protein that is part of the divisome complex and is recruited early to the Z-ring. Probably stimulates Z-ring formation, perhaps through the cross-linking of FtsZ protofilaments. Its function overlaps with FtsA. In Mycolicibacterium gilvum (strain PYR-GCK) (Mycobacterium gilvum (strain PYR-GCK)), this protein is Cell division protein SepF.